We begin with the raw amino-acid sequence, 314 residues long: DNA-directed RNA polymerase subunit alpha (314 aa).

An alpha N-terminal domain (alpha-NTD) region spans residues Met-1–Thr-228. An alpha C-terminal domain (alpha-CTD) region spans residues Lys-245–Asp-314.

It belongs to the RNA polymerase alpha chain family. In terms of assembly, homodimer. RNAP is composed of a core of 2 alpha, a beta and a beta' subunit. The core is associated with a delta subunit, and at least one of epsilon or omega. When a sigma factor is associated with the core the holoenzyme is formed, which can initiate transcription.

The enzyme catalyses RNA(n) + a ribonucleoside 5'-triphosphate = RNA(n+1) + diphosphate. Its function is as follows. DNA-dependent RNA polymerase catalyzes the transcription of DNA into RNA using the four ribonucleoside triphosphates as substrates. This Bacillus subtilis (strain 168) protein is DNA-directed RNA polymerase subunit alpha.